We begin with the raw amino-acid sequence, 163 residues long: UPF0523 protein B (163 aa).

This sequence belongs to the UPF0523 family.

The protein is UPF0523 protein B of Dictyostelium discoideum (Social amoeba).